Reading from the N-terminus, the 108-residue chain is uncharacterized protein (108 aa).

The first 16 residues, 1–16 (MKKLILIAIMASGLVA), serve as a signal peptide directing secretion. Cysteine 17 is lipidated: N-palmitoyl cysteine. Residue cysteine 17 is the site of S-diacylglycerol cysteine attachment.

Its subcellular location is the cell membrane. This is an uncharacterized protein from Escherichia coli (strain K12).